A 117-amino-acid polypeptide reads, in one-letter code: Type II secretion system protein I (117 aa).

The propeptide at Met-1–Gly-6 is leader sequence. Phe-7 is modified (N-methylphenylalanine). The helical transmembrane segment at Phe-7–Ile-27 threads the bilayer.

This sequence belongs to the GSP I family. As to quaternary structure, type II secretion is composed of four main components: the outer membrane complex, the inner membrane complex, the cytoplasmic secretion ATPase and the periplasm-spanning pseudopilus. Interacts with core component EpsG. Cleaved by prepilin peptidase. Post-translationally, methylated by prepilin peptidase at the amino group of the N-terminal phenylalanine once the leader sequence is cleaved by prepilin peptidase.

It is found in the cell inner membrane. Functionally, component of the type II secretion system required for the energy-dependent secretion of extracellular factors such as proteases and toxins from the periplasm. Part of the pseudopilus tip complex that is critical for the recognition and binding of secretion substrates. This chain is Type II secretion system protein I (epsI), found in Vibrio cholerae serotype O1 (strain ATCC 39315 / El Tor Inaba N16961).